Here is a 419-residue protein sequence, read N- to C-terminus: CinA-like protein (419 aa).

It belongs to the CinA family.

The polypeptide is CinA-like protein (Picosynechococcus sp. (strain ATCC 27264 / PCC 7002 / PR-6) (Agmenellum quadruplicatum)).